A 286-amino-acid polypeptide reads, in one-letter code: 33 kDa chaperonin (286 aa).

2 disulfide bridges follow: cysteine 225/cysteine 227 and cysteine 258/cysteine 261.

Belongs to the HSP33 family. In terms of processing, under oxidizing conditions two disulfide bonds are formed involving the reactive cysteines. Under reducing conditions zinc is bound to the reactive cysteines and the protein is inactive.

It is found in the cytoplasm. Functionally, redox regulated molecular chaperone. Protects both thermally unfolding and oxidatively damaged proteins from irreversible aggregation. Plays an important role in the bacterial defense system toward oxidative stress. In Shewanella loihica (strain ATCC BAA-1088 / PV-4), this protein is 33 kDa chaperonin.